Reading from the N-terminus, the 202-residue chain is Venom allergen 5 (202 aa).

4 cysteine pairs are disulfide-bonded: Cys4/Cys16, Cys8/Cys101, Cys26/Cys94, and Cys168/Cys185. In terms of domain architecture, SCP spans 46–187 (KQHNEFRQKV…WHRHYLVCNY (142 aa)).

It belongs to the CRISP family. Venom allergen 5-like subfamily. In terms of tissue distribution, expressed by the venom gland.

The protein localises to the secreted. This Vespa mandarinia (Asian giant hornet) protein is Venom allergen 5.